The primary structure comprises 229 residues: NADH dehydrogenase [ubiquinone] iron-sulfur protein 8, mitochondrial (229 aa).

A mitochondrion-targeting transit peptide spans 1 to 41 (MAAILARKSLSALRSRQLVLAGHTIEGTNGYNRTLLGTRSF). 4Fe-4S ferredoxin-type domains are found at residues 121–150 (RRYATGEERCIACKLCEAICPAQAITIEAE) and 160–189 (TRYDIDMTKCIYCGFCQEACPVDAIVEGPN). Residues Cys130, Cys133, Cys136, Cys140, Cys169, Cys172, Cys175, and Cys179 each contribute to the [4Fe-4S] cluster site.

Belongs to the complex I 23 kDa subunit family. As to quaternary structure, complex I is composed of about 45 different subunits. This is a component of the iron-sulfur (IP) fragment of the enzyme. [4Fe-4S] cluster serves as cofactor. As to expression, lowest expression found in storage tissues of tubers. Higher expression in older leaves than younger ones. Highest expression found in flowers.

The protein localises to the mitochondrion inner membrane. It catalyses the reaction a ubiquinone + NADH + 5 H(+)(in) = a ubiquinol + NAD(+) + 4 H(+)(out). Core subunit of the mitochondrial membrane respiratory chain NADH dehydrogenase (Complex I) that is believed to belong to the minimal assembly required for catalysis. Complex I functions in the transfer of electrons from NADH to the respiratory chain. The immediate electron acceptor for the enzyme is believed to be ubiquinone. May donate electrons to ubiquinone. In Solanum tuberosum (Potato), this protein is NADH dehydrogenase [ubiquinone] iron-sulfur protein 8, mitochondrial.